A 337-amino-acid polypeptide reads, in one-letter code: 1-aminocyclopropane-1-carboxylate deaminase (337 aa).

Position 50 is an N6-(pyridoxal phosphate)lysine (Lys-50). Residue Ser-77 is the Nucleophile of the active site.

This sequence belongs to the ACC deaminase/D-cysteine desulfhydrase family. As to quaternary structure, homotrimer. The cofactor is pyridoxal 5'-phosphate.

It catalyses the reaction 1-aminocyclopropane-1-carboxylate + H2O = 2-oxobutanoate + NH4(+). Functionally, catalyzes a cyclopropane ring-opening reaction, the irreversible conversion of 1-aminocyclopropane-1-carboxylate (ACC) to ammonia and alpha-ketobutyrate. Allows growth on ACC as a nitrogen source. In Rhizobium radiobacter (Agrobacterium tumefaciens), this protein is 1-aminocyclopropane-1-carboxylate deaminase.